The following is a 110-amino-acid chain: Iron-sulfur cluster insertion protein ErpA (110 aa).

Positions 38, 102, and 104 each coordinate iron-sulfur cluster.

It belongs to the HesB/IscA family. In terms of assembly, homodimer. The cofactor is iron-sulfur cluster.

In terms of biological role, required for insertion of 4Fe-4S clusters for at least IspG. In Marinobacter nauticus (strain ATCC 700491 / DSM 11845 / VT8) (Marinobacter aquaeolei), this protein is Iron-sulfur cluster insertion protein ErpA.